Reading from the N-terminus, the 377-residue chain is Heat stress transcription factor B-2b (377 aa).

Positions 1–56 (MPGEQTGETPTVAGVGGGGAGCSAGNSGGSSGCGAGGGGGGSGGGGGGGGDSQRSI) are disordered. The span at 14-51 (GVGGGGAGCSAGNSGGSSGCGAGGGGGGSGGGGGGGGD) shows a compositional bias: gly residues. Residues 57 to 151 (PTPFLTKTYQ…LLRDIQRRKI (95 aa)) mediate DNA binding. The tract at residues 220–265 (TTSCTTAPELVEENERLRKDNERLRKEMTKLKGLYANIYTLMANFT) is hydrophobic repeat HR-A/B. Residues 323 to 327 (KRARR) carry the Nuclear localization signal motif. The tract at residues 326 to 377 (RREEELGAAEEEDDDRREAAAQEGEQSSDVKAEPMEENNSGNHNGSWLELGK) is disordered. Acidic residues predominate over residues 331–340 (LGAAEEEDDD).

The protein belongs to the HSF family. Class B subfamily. As to quaternary structure, homotrimer. Post-translationally, exhibits temperature-dependent phosphorylation.

The protein localises to the nucleus. In terms of biological role, transcriptional regulator that specifically binds DNA sequence 5'-AGAAnnTTCT-3' known as heat shock promoter elements (HSE). The protein is Heat stress transcription factor B-2b (HSFB2B) of Arabidopsis thaliana (Mouse-ear cress).